Reading from the N-terminus, the 674-residue chain is Alpha-L-arabinofuranosidase 2 (674 aa).

Residues 1–24 (MDMETSWRFLRSVCLLSFILGSFS) form the signal peptide. Asn-48, Asn-180, Asn-199, Asn-210, Asn-361, Asn-522, and Asn-548 each carry an N-linked (GlcNAc...) asparagine glycan.

Belongs to the glycosyl hydrolase 51 family. In terms of tissue distribution, high expression in flowers, siliques and stems. Observed in the vasculature of older root tissue, at the tip of anthers and in the petal blade of fully developed flowers, in floral abscission zones and in silique replum tissue. Expressed in the cambium and phloem, but not in the xylem or in the vascular system of floral tissues.

The protein resides in the secreted. It is found in the extracellular space. The protein localises to the extracellular matrix. The enzyme catalyses Hydrolysis of terminal non-reducing alpha-L-arabinofuranoside residues in alpha-L-arabinosides.. Its function is as follows. May be involved in the coordinated dissolution of the cell wall matrix during abscission and in the secondary cell wall formation in xylem vessels. The sequence is that of Alpha-L-arabinofuranosidase 2 (ASD2) from Arabidopsis thaliana (Mouse-ear cress).